A 249-amino-acid polypeptide reads, in one-letter code: Type I iodothyronine deiodinase (249 aa).

At 1-12 (MELPLPGLWLKR) the chain is on the extracellular side. Residues 13-33 (LWVLFQVALHVAMGKVLMTLF) traverse the membrane as a helical; Signal-anchor for type III membrane protein segment. Residues 34–249 (PGRVKQDILA…VRAVLEKLHS (216 aa)) lie on the Cytoplasmic side of the membrane. U126 is a catalytic residue. A non-standard amino acid (selenocysteine) is located at residue U126.

This sequence belongs to the iodothyronine deiodinase family. In terms of assembly, predominantly monomer. Can form homodimers but homodimerization is not essential for enzyme activity.

The protein localises to the cell membrane. Its subcellular location is the endoplasmic reticulum membrane. It localises to the basolateral cell membrane. It carries out the reaction 3,3',5-triiodo-L-thyronine + iodide + A + H(+) = L-thyroxine + AH2. It catalyses the reaction 3,3',5'-triiodo-L-thyronine + iodide + A + H(+) = L-thyroxine + AH2. The catalysed reaction is 3,3'-diiodo-L-thyronine + iodide + A + H(+) = 3,3',5'-triiodo-L-thyronine + AH2. The enzyme catalyses 3,3'-diiodo-L-thyronine + iodide + A + H(+) = 3,3',5-triiodo-L-thyronine + AH2. It carries out the reaction 3'-iodo-L-thyronine + iodide + A + H(+) = 3',5'-diiodo-L-thyronine + AH2. It catalyses the reaction 3-iodo-L-thyronine + iodide + A + H(+) = 3,5-diiodo-L-thyronine + AH2. The catalysed reaction is 3-iodo-L-thyronine + iodide + A + H(+) = 3,3'-diiodo-L-thyronine + AH2. The enzyme catalyses 3,3'-diiodothyronamine + iodide + A + H(+) = 3,3',5'-triiodothyronamine + AH2. It carries out the reaction 3'-iodothyronamine + iodide + A + H(+) = 3',5'-diiodothyronamine + AH2. It catalyses the reaction 3-iodothyronamine + iodide + A + H(+) = 3,3'-diiodothyronamine + AH2. The catalysed reaction is 3,3'-diiodothyronamine + iodide + A + H(+) = 3,3',5-triiodothyronamine + AH2. The enzyme catalyses 3-iodothyronamine + iodide + A + H(+) = 3,5-diiodothyronamine + AH2. It carries out the reaction 3,3'-diiodo-L-thyronine sulfate + iodide + A + H(+) = 3,3',5'-triiodo-L-thyronine sulfate + AH2. It catalyses the reaction 3,3',5'-triiodo-L-thyronine sulfate + iodide + A + H(+) = L-thyroxine sulfate + AH2. The catalysed reaction is 3,3'-diiodo-L-thyronine sulfate + iodide + A + H(+) = 3,3',5-triiodo-L-thyronine sulfate + AH2. Its function is as follows. Plays a crucial role in the metabolism of thyroid hormones (TH) and has specific roles in TH activation and inactivation by deiodination. Catalyzes the deiodination of L-thyroxine (T4) to 3,5,3'-triiodothyronine (T3) and 3,3',5'-triiodothyronine (rT3) to 3,3'-diiodothyronine (3,3'-T2) via outer-ring deiodination (ORD). Catalyzes the deiodination of T4 to rT3, T3 to 3,3'-T2, 3,5-diiodothyronine (3,5-T2) to 3-monoiodothyronine (3-T1) and 3,3'-T2 to 3-T1 via inner-ring deiodination (IRD). Catalyzes the deiodination of 3',5'-diiodothyronine (3',5'-T2) to 3'-monoiodothyronine (3'-T1) via ORD. Catalyzes the phenolic ring deiodinations of 3,3',5'-triiodothyronamine, 3',5'-diiodothyronamine and 3,3'-diiodothyronamine as well as tyrosyl ring deiodinations of 3,5,3'-triiodothyronamine and 3,5-diiodothyronamine. Catalyzes the deiodination of L-thyroxine sulfate and 3,3',5-triiodo-L-thyronine sulfate via IRD and of 3,3',5'-triiodo-L-thyronine sulfate via ORD. This chain is Type I iodothyronine deiodinase (DIO1), found in Sus scrofa (Pig).